We begin with the raw amino-acid sequence, 165 residues long: Large ribosomal subunit protein mL49 (165 aa).

The segment covering 42 to 75 (TTATTTTPLQQQQQQQPTTQPTTPIQTQTGAAPT) has biased composition (low complexity). A disordered region spans residues 42–81 (TTATTTTPLQQQQQQQPTTQPTTPIQTQTGAAPTESTKPV).

The protein belongs to the mitochondrion-specific ribosomal protein mL49 family. Component of the mitochondrial large ribosomal subunit (mt-LSU). Mature N.crassa 74S mitochondrial ribosomes consist of a small (37S) and a large (54S) subunit. The 37S small subunit contains a 16S ribosomal RNA (16S mt-rRNA) and 32 different proteins. The 54S large subunit contains a 23S rRNA (23S mt-rRNA) and 42 different proteins.

It localises to the mitochondrion. Component of the mitochondrial ribosome (mitoribosome), a dedicated translation machinery responsible for the synthesis of mitochondrial genome-encoded proteins, including at least some of the essential transmembrane subunits of the mitochondrial respiratory chain. The mitoribosomes are attached to the mitochondrial inner membrane and translation products are cotranslationally integrated into the membrane. The sequence is that of Large ribosomal subunit protein mL49 (img2) from Neurospora crassa (strain ATCC 24698 / 74-OR23-1A / CBS 708.71 / DSM 1257 / FGSC 987).